The chain runs to 734 residues: MALRFPRFSQGLAQDPTTRRIWFGIATAHDFESHDDITEERLYQNIFASHFGQLAIIFLWTSGNLFHVAWQGNFEAWVQDPLHVRPIAHAIWDPHFGQPAVEAFTRGGALGPVNIAYSGVYQWWYTIGLRTNGDLYSGALFLLFLSAISLLAGWLHLQPKWKPSVSWFKNAESRLNHHLSGLFGVSSLAWTGHLVHVAIPGSRGEYVRWNNFLSILPHPQGLGPLFTGQWNLYAQNPDSSSHLFGTSQGAGTAILTLLGGFHPQTQSLWLTDMAHHHLAIAILFLLAGHMYRTNFGIGHSIKDLLEAHIPPGGRLGRGHKGLYDTINNSIHFQLGLALASLGVITSLVAQHMYSLPAYAFIAQDYTTQAALYTHHQYIAGFIMTGAFAHGAIFFIRDYNPEQNEDNVLARMLDHKEAIISHLSWASLFLGFHTLGLYVHNDVMLAFGTPEKQILIEPIFAQWIQSAHGKTSYGFDVLLSSTNSPAFNAGRSIWLPGWLNAINENSNSLFLTIGPGDFLVHHAIALGLHTTTLILVKGALDARGSKLMPDKKDFGYSFPCDGPGRGGTCDISAWDAFYLAVFWMLNTIGWVTFYWHWKHITLWQGNVSQFNESSTYLMGWLRDYLWLNSSQLINGYNPFGMNSLSVWAWMFLFGHLVWATGFMFLISWRGYWQELIETLAWAHERTPLANLIRWRDKPVALSIVQARLVGLAHFSVGYIFTYAAFLIASTSGKFG.

8 helical membrane-spanning segments follow: residues 46-69 (IFASHFGQLAIIFLWTSGNLFHVA), 135-158 (LYSGALFLLFLSAISLLAGWLHLQ), 175-199 (LNHHLSGLFGVSSLAWTGHLVHVAI), 273-291 (MAHHHLAIAILFLLAGHMY), 330-353 (IHFQLGLALASLGVITSLVAQHMY), 369-395 (AALYTHHQYIAGFIMTGAFAHGAIFFI), 417-439 (AIISHLSWASLFLGFHTLGLYVH), and 517-535 (FLVHHAIALGLHTTTLILV). The [4Fe-4S] cluster site is built by C559 and C568. Transmembrane regions (helical) follow at residues 575 to 596 (AFYLAVFWMLNTIGWVTFYWHW) and 643 to 665 (LSVWAWMFLFGHLVWATGFMFLI). Chlorophyll a is bound by residues H654, M662, and Y670. W671 is a binding site for phylloquinone. Residues 707 to 727 (LVGLAHFSVGYIFTYAAFLIA) traverse the membrane as a helical segment.

The protein belongs to the PsaA/PsaB family. As to quaternary structure, the PsaA/B heterodimer binds the P700 chlorophyll special pair and subsequent electron acceptors. PSI consists of a core antenna complex that captures photons, and an electron transfer chain that converts photonic excitation into a charge separation. The eukaryotic PSI reaction center is composed of at least 11 subunits. P700 is a chlorophyll a/chlorophyll a' dimer, A0 is one or more chlorophyll a, A1 is one or both phylloquinones and FX is a shared 4Fe-4S iron-sulfur center. serves as cofactor.

The protein localises to the plastid. It localises to the chloroplast thylakoid membrane. The enzyme catalyses reduced [plastocyanin] + hnu + oxidized [2Fe-2S]-[ferredoxin] = oxidized [plastocyanin] + reduced [2Fe-2S]-[ferredoxin]. Functionally, psaA and PsaB bind P700, the primary electron donor of photosystem I (PSI), as well as the electron acceptors A0, A1 and FX. PSI is a plastocyanin-ferredoxin oxidoreductase, converting photonic excitation into a charge separation, which transfers an electron from the donor P700 chlorophyll pair to the spectroscopically characterized acceptors A0, A1, FX, FA and FB in turn. Oxidized P700 is reduced on the lumenal side of the thylakoid membrane by plastocyanin. In Lotus japonicus (Lotus corniculatus var. japonicus), this protein is Photosystem I P700 chlorophyll a apoprotein A2.